The following is a 208-amino-acid chain: Small ribosomal subunit protein uS4 (208 aa).

Residues 98 to 161 (RRLDNVVYRM…KSNPQVVRAM (64 aa)) enclose the S4 RNA-binding domain.

The protein belongs to the universal ribosomal protein uS4 family. As to quaternary structure, part of the 30S ribosomal subunit. Contacts protein S5. The interaction surface between S4 and S5 is involved in control of translational fidelity.

One of the primary rRNA binding proteins, it binds directly to 16S rRNA where it nucleates assembly of the body of the 30S subunit. Its function is as follows. With S5 and S12 plays an important role in translational accuracy. The polypeptide is Small ribosomal subunit protein uS4 (Helicobacter acinonychis (strain Sheeba)).